The sequence spans 205 residues: Probable inactive peroxygenase-like protein (205 aa).

The short motif at 79–88 is the Proline-knot element; it reads PVQLFGYILP. Phosphoserine is present on S183.

The protein belongs to the caleosin family.

The protein resides in the lipid droplet. In Arabidopsis thaliana (Mouse-ear cress), this protein is Probable inactive peroxygenase-like protein.